The chain runs to 160 residues: SsrA-binding protein (160 aa).

Residues K132–E160 form a disordered region. The segment covering D135 to Q146 has biased composition (basic and acidic residues).

It belongs to the SmpB family.

Its subcellular location is the cytoplasm. Functionally, required for rescue of stalled ribosomes mediated by trans-translation. Binds to transfer-messenger RNA (tmRNA), required for stable association of tmRNA with ribosomes. tmRNA and SmpB together mimic tRNA shape, replacing the anticodon stem-loop with SmpB. tmRNA is encoded by the ssrA gene; the 2 termini fold to resemble tRNA(Ala) and it encodes a 'tag peptide', a short internal open reading frame. During trans-translation Ala-aminoacylated tmRNA acts like a tRNA, entering the A-site of stalled ribosomes, displacing the stalled mRNA. The ribosome then switches to translate the ORF on the tmRNA; the nascent peptide is terminated with the 'tag peptide' encoded by the tmRNA and targeted for degradation. The ribosome is freed to recommence translation, which seems to be the essential function of trans-translation. In Leptospira borgpetersenii serovar Hardjo-bovis (strain JB197), this protein is SsrA-binding protein.